The chain runs to 144 residues: Maximins 5/H4 type 3 (144 aa).

A signal peptide spans 1–18 (MNFKYIVAVSFLIASAYA). 2 propeptides span residues 19-43 (RSVQ…REIR) and 74-123 (TAED…KEKR). Leucine 143 is modified (leucine amide).

It belongs to the bombinin family. In terms of tissue distribution, expressed by the skin glands.

It localises to the secreted. Its function is as follows. Maximin-5 shows antibacterial activity against both Gram-positive and Gram-negative bacteria. The only exception is the resistance of E.coli. Also shows antimicrobial activity against fungi C.albicans, A.flavus and P.uticale. It has little hemolytic activity. It does not possess a significant cytotoxicity against tumor cell lines. It does not possess a significant anti-HIV activity. In terms of biological role, maximin-H4 shows antibacterial activity against both Gram-positive and Gram-negative bacteria. It also shows antimicrobial activity against the fungus C.albicans. Shows strong hemolytic activity. The protein is Maximins 5/H4 type 3 of Bombina maxima (Giant fire-bellied toad).